Here is an 848-residue protein sequence, read N- to C-terminus: MLKIIEKLIGSYSEREIKKILPIVDKIESLAPEYERLTDAELRQKTDIFKERLKNGETLDDILPEAFAAVREAAWRTLKMRHFRVQLIGGIVLHQGRIAEMKTGEGKTLVATLPAYLNALEGKGVHIVTVNDYLAKRDAEWMGPIYNFLGLSVGVIVHGLTSEERRKAYNCDVTYGTNNEFGFDYLRDNMAIYKEELVQRELNYAIIDEVDSILIDEARTPLIISGPAEKSTDLYKRADNFVRRLKPLYYNSDDDKQMPDTTGYDYIVNEKRHTVALTEEGIKKAEKYFGVTNLADPENATLHHHIIQALKAHALMKRDRDYVVKDGQVIIVDEFTGRLMYGRRFSEGLHQAIEAKEGVRIERESRTLATITFQNYFRLYKKLAGMTGTAKTEEQEFREIYKLDVIEIPTHKPMIRIDHPDKVYKTEKAKFEAIVEEIVETHKKGQPVLVGTVSIEKSEMLSEMLKKRGIKHEVLNAKHHEKEAMIIAKAGQKGAVTIATNMAGRGTDIVLGEGVAELGGLKVIGTERHESRRIDNQLRGRAGRQGDPGESRFYVSLEDDLMRLFGSERIKRLVESLGLPDDQPIEHKLLSDAIEKAQKRVEARNFEIRKHLLQFDDVLNKQREIIYSQRRKVLEGENLRDSILNMIDELVDYKIKVYTGESPHPDDWDIKGLLQDLKFIFLDGELSEQDARNMTKDELKEKLISIAKEKYLKKEQEVGELMRELERVVLLRVVDMHWMDHIDAVDQLREGISLRAIGQKDPIVEFRFEAFEMFDQMIKRIQEDTIKIILHANVENMPKRERVVKEMYENSPSDAPVRKSVVKTQKVGRNDPCPCGSGKKYKKCCGAV.

ATP is bound by residues Q86, 104-108 (GEGKT), and D508. Zn(2+) is bound by residues C833, C835, C844, and C845.

It belongs to the SecA family. As to quaternary structure, monomer and homodimer. Part of the essential Sec protein translocation apparatus which comprises SecA, SecYEG and auxiliary proteins SecDF. Other proteins may also be involved. Requires Zn(2+) as cofactor.

The protein resides in the cell membrane. Its subcellular location is the cytoplasm. The enzyme catalyses ATP + H2O + cellular proteinSide 1 = ADP + phosphate + cellular proteinSide 2.. Functionally, part of the Sec protein translocase complex. Interacts with the SecYEG preprotein conducting channel. Has a central role in coupling the hydrolysis of ATP to the transfer of proteins into and across the cell membrane, serving as an ATP-driven molecular motor driving the stepwise translocation of polypeptide chains across the membrane. The sequence is that of Protein translocase subunit SecA from Caldicellulosiruptor saccharolyticus (strain ATCC 43494 / DSM 8903 / Tp8T 6331).